A 392-amino-acid chain; its full sequence is MEWWASSPLRLWLLLFLLPSAQGRQKESGSKWKVFIDQINRSLENYEPCSSQNCSCYHGVIEEDLTPFRGGISRKMMAEVVRRKLGTHYQITKNRLYRENDCMFPSRCSGVEHFILEVIGRLPDMEMVINVRDYPQVPKWMEPAIPVFSFSKTSEYHDIMYPAWTFWEGGPAVWPIYPTGLGRWDLFREDLVRSAAQWPWKKKNSTAYFRGSRTSPERDPLILLSRKNPKLVDAEYTKNQAWKSMKDTLGKPAAKDVHLVDHCKYKYLFNFRGVAASFRFKHLFLCGSLVFHVGDEWLEFFYPQLKPWVHYIPVKTDLSNVQELLQFVKANDDVAQEIAERGSQFIRNHLQMDDITCYWENLLSEYSKFLSYNVTRRKGYDQIIPKMLKTEL.

A signal peptide spans 1-23; the sequence is MEWWASSPLRLWLLLFLLPSAQG. 2 N-linked (GlcNAc...) asparagine glycosylation sites follow: Asn-40 and Asn-53. 4 disulfides stabilise this stretch: Cys-49–Cys-56, Cys-54–Cys-357, Cys-102–Cys-108, and Cys-263–Cys-286. The interval 103-107 is interaction with the consensus sequence C-X-S-X-[PA]-C in peptide substrates; the sequence is MFPSR. Asp-133 acts as the Proton donor/acceptor in catalysis. The interaction with the consensus sequence C-X-S-X-[PA]-C in peptide substrates stretch occupies residues 172 to 178; the sequence is AVWPIYP. Tyr-177 contributes to the UDP-alpha-D-glucose binding site. A glycan (N-linked (GlcNAc...) asparagine) is linked at Asn-204. UDP-alpha-D-glucose is bound by residues Ser-212, Arg-218, and 274–279; that span reads VAASFR. Asn-373 carries an N-linked (GlcNAc...) asparagine glycan. Residues 389-392 carry the Prevents secretion from ER motif; that stretch reads KTEL.

The protein belongs to the glycosyltransferase 90 family. Expressed in most adult tissues at different intensities. Abundantly expressed in liver. Expressed also in brain, heart, skeletal muscle, spleen, kidney, placenta, lung and peripheral blood leukocyte. Not detectable in colon, thymus and small intestine. Expressed in the epidermis, especially in the upper parts, stratum spinosum and stratum granulosum (at protein level).

Its subcellular location is the endoplasmic reticulum lumen. The enzyme catalyses L-seryl-[EGF-like domain protein] + UDP-alpha-D-xylose = 3-O-(beta-D-xylosyl)-L-seryl-[EGF-like domain protein] + UDP + H(+). It catalyses the reaction L-seryl-[EGF-like domain protein] + UDP-alpha-D-glucose = 3-O-(beta-D-glucosyl)-L-seryl-[EGF-like domain protein] + UDP + H(+). The protein operates within protein modification; protein glycosylation. In terms of biological role, dual specificity glycosyltransferase that catalyzes the transfer of glucose and xylose from UDP-glucose and UDP-xylose, respectively, to a serine residue found in the consensus sequence of C-X-S-X-P-C. Specifically targets extracellular EGF repeats of protein such as CRB2, F7, F9 and NOTCH2. Acts as a positive regulator of Notch signaling by mediating O-glucosylation of Notch, leading to regulate muscle development. Notch glucosylation does not affect Notch ligand binding. Required during early development to promote gastrulation: acts by mediating O-glucosylation of CRB2, which is required for CRB2 localization to the cell membrane. The protein is Protein O-glucosyltransferase 1 of Homo sapiens (Human).